Consider the following 1096-residue polypeptide: Lysine-specific demethylase PHF2 (1096 aa).

The PHD-type zinc finger occupies 5-56 (PVYCVCRLPYDVTRFMIECDACKDWFHGSCVGVEEEEAPDIDIYHCPNCEKT). 2 residues coordinate 2-oxoglutarate: threonine 193 and threonine 246. The JmjC domain occupies 197–353 (FSDTRMSSFV…MQMRAYEVER (157 aa)). Residues histidine 249 and aspartate 251 each coordinate Fe cation. 2-oxoglutarate contacts are provided by tyrosine 259, lysine 266, tyrosine 321, and threonine 323. Tyrosine 321 serves as a coordination point for Fe cation. Disordered regions lie at residues 447–634 (KAVR…KDNK) and 646–674 (GSKA…KPVR). The residue at position 474 (serine 474) is a Phosphoserine. Threonine 479 bears the Phosphothreonine mark. A compositionally biased stretch (pro residues) spans 503–518 (SKIPKPPKPPKPPRPP). Serine 539 carries the post-translational modification Phosphoserine. Composition is skewed to basic and acidic residues over residues 548 to 563 (LEAH…EPPK) and 578 to 624 (DVVH…KLEK). Residue serine 655 is modified to Phosphoserine. Positions 665-674 (FKEDKPKPVR) are enriched in basic and acidic residues. A phosphoserine mark is found at serine 681 and serine 705. A Glycyl lysine isopeptide (Lys-Gly) (interchain with G-Cter in SUMO2) cross-link involves residue lysine 711. Disordered stretches follow at residues 719–799 (TKPK…QGML), 817–846 (AGQA…KRLL), and 877–1078 (YPSL…MATA). Lysine 720 carries the post-translational modification N6-acetyllysine. Position 728 is a phosphotyrosine (tyrosine 728). Residues 729–757 (KSDDSSDEGSLHIDTDTKPGRNARVKKES) show a composition bias toward basic and acidic residues. Phosphoserine occurs at positions 730, 733, 734, and 738. Residues serine 879, serine 882, and serine 899 each carry the phosphoserine modification. The segment covering 916-925 (RQDRPVREGT) has biased composition (basic and acidic residues). The span at 949–959 (SKKKKSAKRKL) shows a compositional bias: basic residues. Low complexity-rich tracts occupy residues 960–1009 (TPNT…EGSS) and 1027–1040 (TAAG…AGRT). Residues 1053–1065 (RRPSASSPNNNTA) are compositionally biased toward polar residues. Serine 1056 carries the phosphoserine; by PKA modification.

It belongs to the JHDM1 histone demethylase family. JHDM1D subfamily. In terms of assembly, component of the PHF2-ARID5B complex, at least composed of PHF2 and ARID5B. Interacts with HNF4A and NR1H4. Interacts with RELA. Post-translationally, phosphorylated by PKA on specific serine residues, leading to the formation of an active lysine demethylase complex. In terms of tissue distribution, widely expressed, including in liver (at protein level).

The protein localises to the nucleus. Its subcellular location is the nucleolus. It is found in the chromosome. It localises to the centromere. The protein resides in the kinetochore. It carries out the reaction N(6),N(6)-dimethyl-L-lysyl(9)-[histone H3] + 2-oxoglutarate + O2 = N(6)-methyl-L-lysyl(9)-[histone H3] + formaldehyde + succinate + CO2. Its activity is regulated as follows. Enzymatically inactive by itself, and become active following phosphorylation by PKA. Lysine demethylase that demethylates both histones and non-histone proteins. Enzymatically inactive by itself, and becomes active following phosphorylation by PKA: forms a complex with ARID5B and mediates demethylation of methylated ARID5B. Demethylation of ARID5B leads to target the PHF2-ARID5B complex to target promoters, where PHF2 mediates demethylation of dimethylated 'Lys-9' of histone H3 (H3K9me2), followed by transcription activation of target genes. The PHF2-ARID5B complex acts as a coactivator of HNF4A in liver. PHF2 is recruited to trimethylated 'Lys-4' of histone H3 (H3K4me3) at rDNA promoters and promotes expression of rDNA. Involved in the activation of toll-like receptor 4 (TLR4)-target inflammatory genes in macrophages by catalyzing the demethylation of trimethylated histone H4 lysine 20 (H4K20me3) at the gene promoters. The sequence is that of Lysine-specific demethylase PHF2 from Homo sapiens (Human).